We begin with the raw amino-acid sequence, 459 residues long: MLKLYNSLTRQKEQFVPLQPGKVGMYVCGVTIYDLCHIGHGRTFVSFDMIVRYLRYSGYDVNFQRNITDVDDKIIKRANENKESCDSLTERLIAEMHRDFDALNMARPDNEPRATLHMPEIIEMVEKLIEREHAYVASNGDVLFSVSSFPEYGRLSGQNLEQLQAGARVEVEDAKRDPMDFVLWKMSKPGEPTWESPWGPGRPGWHIECSAMNSKHLGNHFDIHGGGSDLQFPHHENEIAQSCCAHDTPYVNYWMHTGMVMVDKEKMSKSLNNFFTIRDVLGHYDATTVRYFLLSGHYRSQLNYSEDNLKQAKSGLERIYTALKDLDLTVEAAPAEEFVAKFKSAMDDDFNTPEAYSVLFDMVREINRLKATDMAKASALGVALKQLADVLGILGQDVDTFFKGEGNDDEVAEIEALIVERNRARAEKDWPAADVARDGLNALGVILEDGPEGTTWRKK.

Residue Cys28 coordinates Zn(2+). A 'HIGH' region motif is present at residues Val30–His40. Zn(2+)-binding residues include Cys209, His234, and Glu238. The short motif at Lys266–Ser270 is the 'KMSKS' region element. Lys269 is an ATP binding site.

This sequence belongs to the class-I aminoacyl-tRNA synthetase family. As to quaternary structure, monomer. Zn(2+) serves as cofactor.

The protein localises to the cytoplasm. It catalyses the reaction tRNA(Cys) + L-cysteine + ATP = L-cysteinyl-tRNA(Cys) + AMP + diphosphate. This is Cysteine--tRNA ligase from Shewanella pealeana (strain ATCC 700345 / ANG-SQ1).